We begin with the raw amino-acid sequence, 434 residues long: A-adding tRNA nucleotidyltransferase (434 aa).

20-23 (GAVR) lines the ATP pocket. Positions 33 and 35 each coordinate Mg(2+). Residues 91-92 (RD), Asn-96, 132-141 (DPLRAWRAAR), and Arg-177 each bind ATP. Residues 227–339 (VFEHGVEALH…ELLPDLLSLM (113 aa)) enclose the HD domain.

Belongs to the tRNA nucleotidyltransferase/poly(A) polymerase family. The cofactor is Mg(2+).

It catalyses the reaction a tRNA with a 3' CC end + ATP = a tRNA with a 3' CCA end + diphosphate. In terms of biological role, tRNA nucleotidyltransferase involved in the synthesis of the tRNA CCA terminus. Adds the terminal adenosine residue to tRNA. The protein is A-adding tRNA nucleotidyltransferase of Deinococcus radiodurans (strain ATCC 13939 / DSM 20539 / JCM 16871 / CCUG 27074 / LMG 4051 / NBRC 15346 / NCIMB 9279 / VKM B-1422 / R1).